We begin with the raw amino-acid sequence, 86 residues long: Palustrin-3b (86 aa).

Positions 1–22 (MFTLKKPLLLIVLLGIISLSLC) are cleaved as a signal peptide. The propeptide occupies 23-36 (EQERNADEDEESEI). A disulfide bridge connects residues C81 and C86.

Expressed by the skin glands.

The protein localises to the secreted. Antimicrobial peptide. The sequence is that of Palustrin-3b from Odorrana versabilis (Chinese bamboo leaf odorous frog).